Reading from the N-terminus, the 816-residue chain is MESRVLLRTFCLIFGLGAVWGLGVDPSLQIDVLTELELGESTTGVRQVPGLHNGTKAFLFQDTPRSVKASTATAEQFFQKLRNKHEFTILVTLKQTHLNSGVILSIHHLDHRYLELESSGHRNEVRLHYRSGSHRPHTEVFPYILADDKWHKLSLAISASHLILHIDCNKIYERVVEKPSTDLPLGTTFWLGQRNNAHGYFKGIMQDVQLLVMPQGFIAQCPDLNRTCPTCNDFHGLVQKIMELQDILAKTSAKLSRAEQRMNRLDQCYCERTCTMKGTTYREFESWIDGCKNCTCLNGTIQCETLICPNPDCPLNSALAYVDGKCCKECKSICQFQGRTYFEGERNTVYSSSGVCVLYECKDQTMKLVESSGCPALDCPESHQITLSHSCCKVCKGYDFCSERHNCMENSVCRNLNDRAVCSCRDGFRALREDNAYCEDIDECAEGRHYCRENTMCVNTPGSFMCICKTGYIRIDDYSCTEHDECITNQHNCDENALCFNTVGGHNCVCKPGYTGNGTTCKAFCKDGCRNGGACIAANVCACPQGFTGPSCETDIDECSDGFVQCDSRANCINLPGWYHCECRDGYHDNGMFSPSGESCEDIDECGTGRHSCANDTICFNLDGGYDCRCPHGKNCTGDCIHDGKVKHNGQIWVLENDRCSVCSCQNGFVMCRRMVCDCENPTVDLFCCPECDPRLSSQCLHQNGETLYNSGDTWVQNCQQCRCLQGEVDCWPLPCPDVECEFSILPENECCPRCVTDPCQADTIRNDITKTCLDEMNVVRFTGSSWIKHGTECTLCQCKNGHICCSVDPQCLQEL.

Positions Met1–Gly21 are cleaved as a signal peptide. Residues Asn53, Asn225, Asn293, and Asn298 are each glycosylated (N-linked (GlcNAc...) asparagine). Residues Pro64–Cys228 enclose the Laminin G-like domain. The region spanning Arg272–Lys331 is the VWFC 1 domain. An EGF-like 1 domain is found at Gly397–Glu439. 3 disulfide bridges follow: Cys401–Cys413, Cys407–Cys422, and Cys424–Cys438. Ca(2+)-binding residues include Asp440, Ile441, and Glu443. The region spanning Asp440–Thr481 is the EGF-like 2; calcium-binding domain. 9 disulfide bridges follow: Cys444-Cys457, Cys451-Cys466, Cys468-Cys480, Cys486-Cys499, Cys493-Cys508, Cys510-Cys521, Cys525-Cys535, Cys529-Cys541, and Cys543-Cys552. Residues Asn459, Thr460, and Ser463 each contribute to the Ca(2+) site. The EGF-like 3; calcium-binding domain maps to Glu482–Lys522. N-linked (GlcNAc...) asparagine glycosylation occurs at Asn517. The EGF-like 4 domain maps to Ala523–Glu553. Thr548 carries O-linked (GlcNAc...) threonine glycosylation. Ca(2+) is bound by residues Asp555, Ile556, and Glu558. An EGF-like 5; calcium-binding domain is found at Asp555–Glu601. Intrachain disulfides connect Cys559–Cys572, Cys566–Cys581, and Cys583–Cys600. 3 residues coordinate Ca(2+): Asn574, Leu575, and Trp578. Asp602, Ile603, and Glu605 together coordinate Ca(2+). Positions Asp602–Thr637 constitute an EGF-like 6; calcium-binding domain. 3 cysteine pairs are disulfide-bonded: Cys606-Cys619, Cys613-Cys628, and Cys630-Cys636. Asn615 is a glycosylation site (N-linked (GlcNAc...) asparagine). The Ca(2+) site is built by Asn621, Leu622, and Gly625. Residue Asn635 is glycosylated (N-linked (GlcNAc...) asparagine). VWFC domains lie at Gly638–Asp693 and Ser698–Val756.

As to quaternary structure, homotrimer. Binds to PRKCB. Interacts with NICOL1; this interaction triggers epididymal differentiation.

The protein localises to the secreted. Its function is as follows. Plays multiple roles in neural tissues, regulates neuronal proliferation, survival, differentiation, polarization, as well as axon guidance and synaptic functions. Plays an important role in axon development during neuronal differentiation through the MAPK intracellular signaling pathway. Via binding to its receptor ROBO3, plays a role in axon guidance, functions as a repulsive guidance cue for commissural axons, helping to steer them across the spinal cord midline. Required for neuron survival through the modulation of MAPK signaling pathways too. Involved in the regulation of hypothalamic GNRH secretion and the control of puberty. Functionally, testicular luminal protein that signals through a ROS1-pathway to regulate the epididymal initial segment (IS) maturation, sperm maturation and male fertility. In Pongo abelii (Sumatran orangutan), this protein is Protein kinase C-binding protein NELL2 (NELL2).